The chain runs to 128 residues: Large ribosomal subunit protein bL12 (128 aa).

Belongs to the bacterial ribosomal protein bL12 family. Homodimer. Part of the ribosomal stalk of the 50S ribosomal subunit. Forms a multimeric L10(L12)X complex, where L10 forms an elongated spine to which 2 to 4 L12 dimers bind in a sequential fashion. Binds GTP-bound translation factors.

Its function is as follows. Forms part of the ribosomal stalk which helps the ribosome interact with GTP-bound translation factors. Is thus essential for accurate translation. The chain is Large ribosomal subunit protein bL12 from Kocuria rhizophila (strain ATCC 9341 / DSM 348 / NBRC 103217 / DC2201).